A 224-amino-acid chain; its full sequence is Lipoprotein-releasing system ATP-binding protein LolD (224 aa).

The ABC transporter domain maps to 5–224 (LVLDGLTKAY…VVRLEAGRVV (220 aa)). Position 42 to 49 (42 to 49 (APSGAGKS)) interacts with ATP.

It belongs to the ABC transporter superfamily. Lipoprotein translocase (TC 3.A.1.125) family. In terms of assembly, the complex is composed of two ATP-binding proteins (LolD) and two transmembrane proteins (LolC and LolE).

Its subcellular location is the cell inner membrane. Part of the ABC transporter complex LolCDE involved in the translocation of mature outer membrane-directed lipoproteins, from the inner membrane to the periplasmic chaperone, LolA. Responsible for the formation of the LolA-lipoprotein complex in an ATP-dependent manner. In Cereibacter sphaeroides (strain ATCC 17023 / DSM 158 / JCM 6121 / CCUG 31486 / LMG 2827 / NBRC 12203 / NCIMB 8253 / ATH 2.4.1.) (Rhodobacter sphaeroides), this protein is Lipoprotein-releasing system ATP-binding protein LolD.